The chain runs to 749 residues: Disintegrin and metalloproteinase domain-containing protein 10 (749 aa).

The N-terminal stretch at 1–18 (MGLLRLVFLLSWAASAGG) is a signal peptide. Residues 19 to 213 (LYGNPLNKYI…SGPVILRKKR (195 aa)) constitute a propeptide that is removed on maturation. The Extracellular portion of the chain corresponds to 19–673 (LYGNPLNKYI…NPELYENIAE (655 aa)). The short motif at 170-177 (GGCADSSV) is the Cysteine switch element. A Zn(2+)-binding site is contributed by C172. Positions 220–457 (NTCQLFIQTD…KENSCFVESG (238 aa)) constitute a Peptidase M12B domain. 17 cysteine pairs are disulfide-bonded: C222–C314, C345–C452, C400–C436, C461–C496, C472–C485, C474–C480, C484–C516, C504–C512, C511–C537, C525–C544, C531–C563, C556–C568, C573–C599, C581–C608, C583–C598, C595–C640, and C633–C646. 2 N-linked (GlcNAc...) asparagine glycosylation sites follow: N268 and N279. H384 lines the Zn(2+) pocket. Residue E385 is part of the active site. 2 residues coordinate Zn(2+): H388 and H394. N440 carries an N-linked (GlcNAc...) asparagine glycan. A Disintegrin domain is found at 458 to 552 (QPICGNGLVE…QCPPSEPREN (95 aa)). The N-linked (GlcNAc...) asparagine glycan is linked to N552. A helical membrane pass occupies residues 674 to 694 (WIVAHWWAVLLMGIALIMLMA). The Cytoplasmic portion of the chain corresponds to 695–749 (GFIKICSVHTPSSNPKLPPPKPLPGTLKRRRPPQTTQQPSRQRPRENYQMGHMRH). Positions 705–749 (PSSNPKLPPPKPLPGTLKRRRPPQTTQQPSRQRPRENYQMGHMRH) are disordered. Residues 709-716 (PKLPPPKP) carry the SH3-binding motif. T720 is subject to Phosphothreonine. Positions 723-729 (RRRPPQT) match the SH3-binding motif.

Zn(2+) is required as a cofactor. In terms of processing, the precursor is cleaved by furin and PCSK7.

The protein localises to the membrane. The enzyme catalyses Endopeptidase of broad specificity.. Controls the proteolytic processing of Notch and mediates lateral inhibition during neurogenesis. This Xenopus laevis (African clawed frog) protein is Disintegrin and metalloproteinase domain-containing protein 10 (adam10).